The chain runs to 1350 residues: MDGGMTVSDKGNWSFFGMASENKRPKWAAILSKAMGIQASFMTDQLRTAGPNPEGLISIHNSPDEALAVYSAHHTDGLNTCKICGHNVRDLKAHARQVHLGRLCKIENLAELGLAQTLRIDRDVEFAYIDGCYFWIGARAAPGLSRFFKPDATRCHRCPTVEWPDIENGESLEAVRLTGESPRLTDRARHLLAFHPGDFMASITTLISPKKSMNCEAIYSARGELQRFQLMWRGYGYKGERATAFPTKAVNEGFGTAVHEFLKMYDARTKALSVLPSDTKIYTVRFMEGEEPTTAVIPPGTHSVVPATTPAPEAPGKLNMSSPDLELIRRKGGKRVIEMVSGVAPSGSLVGAPSPSERVMKRKSERPLDDSSAVKRVSKKVTSVTDQECTAWESSIPGVSIERAPTIYTGKSAQTIAGVLTEGGVAPYPLIMDVDGERDLPIDLPNQIITGRVIESLGDLEGDIAARKEVIKKAVEALRVYSYRPLMQLSVIGIFFDEGWIYSVLEKPTGDLKTMSQTLRVLSTTGTFPWGGKSPAGTWKMAIVHHIFRDVVKLVALQNRLKVTPVFGKQDVYVWEHGLTIAPNSVEPRVDITGAQNLIISLLSQYTMFQHTTKLPIKPEVRATLSPDVLKLLDWPPRPPSSEVTEMAGRLGVMGDIGHPTIQFPLDFKIHMGSERVLRPDVLLIKPPKAAPSFYPSMEEVLRVLETPGPRSDESDEMVPASALISHATLAASQRGLVAAHASVGRAQAALSTRGGAFGATPSGEDATSALMKMIQELSNTSIPTSRSLLCELGLSSMRGPAVATPRPAEAPPSTSEGELFDVDAFLEKWTGPAPVEGTAPVPVEIPIVGDDIIRQSMALAGGECWELTETPSGNVVATGFTTPATPTIINPPSPHVFAVPMPPPANPGKRTKSVKRRIEAASKMEGGERDATGSSMDTVRGTGGLVTVKPQSLIRGDELGLMDKWVFEPALDTRTSSYLRGVHRTIVQRWLQNHGSMKPKMCRDPPTFAITDADVPILTTTPDATRRPICVDNNLPSTPMVFTWGDPNGSEPVPTEHRTSYELYRGDIQAAHQCNLYLGPSMEIYAYSPRVWIAQHTFDGANQIWGGFPPVIRYVYLNMMKIRPSKHIPYIYTVIEPHSVKGYKMNMYALITPMGHPVLTTGVAGYSKYLIKALVRTLHAVHSAGLKIGYMHPKNVWVKTDALGSDLQTYYIFDVVTQILENVFMPGSVGGRNAPVIPPEWTSKMTDNGPPLNLITEASDIFCLGRLLTVFCAQQDLTSEQVALIQLMCAAKPEERPCVTDLLVNFNVSPEEPFYPVDIGEMPVKITNTKKAERSNTAYVRFPVQGAQE.

Disordered regions lie at residues 348–371 (SLVGAPSPSERVMKRKSERPLDDS) and 923–944 (SKMEGGERDATGSSMDTVRGTG). Positions 923–932 (SKMEGGERDA) are enriched in basic and acidic residues.

This is an uncharacterized protein from Ictalurid herpesvirus 1 (strain Auburn) (IcHV-1).